The chain runs to 296 residues: Phosphatidylglycerol--prolipoprotein diacylglyceryl transferase (296 aa).

3 consecutive transmembrane segments (helical) span residues 17–37 (LAVR…IVVG), 59–79 (MMFY…VLFY), and 97–117 (GGMS…LFAW). An a 1,2-diacyl-sn-glycero-3-phospho-(1'-sn-glycerol)-binding site is contributed by Arg-142. Helical transmembrane passes span 230–250 (MGAI…TVEF) and 265–285 (LSMG…MMIW).

The protein belongs to the Lgt family.

It is found in the cell inner membrane. The catalysed reaction is L-cysteinyl-[prolipoprotein] + a 1,2-diacyl-sn-glycero-3-phospho-(1'-sn-glycerol) = an S-1,2-diacyl-sn-glyceryl-L-cysteinyl-[prolipoprotein] + sn-glycerol 1-phosphate + H(+). It participates in protein modification; lipoprotein biosynthesis (diacylglyceryl transfer). Catalyzes the transfer of the diacylglyceryl group from phosphatidylglycerol to the sulfhydryl group of the N-terminal cysteine of a prolipoprotein, the first step in the formation of mature lipoproteins. The polypeptide is Phosphatidylglycerol--prolipoprotein diacylglyceryl transferase (Burkholderia pseudomallei (strain 668)).